A 146-amino-acid chain; its full sequence is Hemoglobin subunit beta-2 (146 aa).

A Globin domain is found at 2-146 (KWTDKERAVI…VVSALGKQYC (145 aa)). His-63 and His-92 together coordinate heme b.

This sequence belongs to the globin family. Heterotetramer of two alpha chains and two beta chains. As to expression, red blood cells.

Its function is as follows. Involved in oxygen transport from gills to the various peripheral tissues. This Lycodes reticulatus (Arctic eelpout) protein is Hemoglobin subunit beta-2 (hbb2).